A 1460-amino-acid chain; its full sequence is Collagen alpha-1(I) chain (1460 aa).

The signal sequence occupies residues 1 to 22 (MFSFVDLRLLLLLAATALLTHG). The propeptide at 23 to 157 (QEEGQEEDIP…PPGLGGNFAP (135 aa)) is N-terminal propeptide. Residues 34–92 (VTCVQNGLRYYDRDVWKPEACRICVCDNGNVLCDDVICDETKNCPGAQVPPGECCPVCP) form the VWFC domain. The segment at 96-1213 (ASPTDQETTG…KAHDGGRYYR (1118 aa)) is disordered. Over residues 134–149 (PGLPGPPGPPGPPGPP) the composition is skewed to pro residues. Residues 158–174 (QMSYGYDEKSTGGISVP) are nonhelical region (N-terminal). K166 carries the post-translational modification Allysine. S167 carries the post-translational modification Phosphoserine. A triple-helical region region spans residues 175–1188 (GPMGPSGPRG…PGPPGPPGPP (1014 aa)). Residues P186, P189, P192, P201, P204, P207, P222, P237, P243, P252, and P258 each carry the 4-hydroxyproline modification. The span at 194–213 (PQGFQGPPGEPGEPGASGPM) shows a compositional bias: low complexity. Residues 225 to 239 (NGDDGEAGKPGRPGE) are compositionally biased toward basic and acidic residues. Residue K261 is modified to 5-hydroxylysine; alternate. O-linked (Gal...) hydroxylysine; alternate glycosylation occurs at K261. Phosphoserine is present on S267. The span at 275–291 (DAGPAGPKGEPGSPGEN) shows a compositional bias: low complexity. P285, P288, P294, P303, and P309 each carry 4-hydroxyproline. The span at 314-327 (PAGARGNDGATGAA) shows a compositional bias: low complexity. Over residues 329-341 (PPGPTGPAGPPGF) the composition is skewed to pro residues. 11 positions are modified to 4-hydroxyproline: P330, P339, P342, P369, P372, P384, P390, P399, P405, P408, and P423. A compositionally biased stretch (low complexity) spans 375–414 (AGAAGPAGNPGADGQPGAKGANGAPGIAGAPGFPGARGPS). Residue K426 is modified to 5-hydroxylysine. 4-hydroxyproline occurs at positions 432, 435, 447, 456, 471, 477, 486, and 492. A compositionally biased stretch (gly residues) spans 481-490 (GERGGPGSRG). K501 bears the 5-hydroxylysine mark. Residues P510, P519, P525, P531, P540, P543, P552, P561, P567, P579, P588, P597, P600, P618, P636, P642, P648, P654, P660, P666, P678, P687, P699, P711, P714, P720, P726, and P735 each carry the 4-hydroxyproline modification. The segment covering 534–560 (KGLTGSPGSPGPDGKTGPPGPAGQDGR) has biased composition (low complexity). A compositionally biased stretch (low complexity) spans 569–588 (ARGQAGVMGFPGPKGAAGEP). The span at 630-657 (QGPAGSPGFQGLPGPAGPPGEAGKPGEQ) shows a compositional bias: low complexity. Residues 692–720 (PRGANGAPGNDGAKGDAGAPGAPGSQGAP) show a composition bias toward low complexity. The Cell attachment site signature appears at 741–743 (RGD). The residue at position 747 (K747) is a 5-hydroxylysine. A 4-hydroxyproline mark is found at P753, P768, and P774. Residues 780–794 (AGPSGPAGPTGARGA) show a composition bias toward low complexity. S783 carries the post-translational modification Phosphoserine. A 4-hydroxyproline mark is found at P795, P801, P804, P813, P819, P837, P846, and P855. The span at 807-834 (AGFAGPPGADGQPGAKGEPGDAGAKGDA) shows a compositional bias: low complexity. Residues 836–848 (PPGPAGPTGPPGP) are compositionally biased toward pro residues. K858 carries the 5-hydroxylysine modification. Low complexity predominate over residues 863 to 879 (SAGPPGATGFPGAAGRV). 4-hydroxyproline occurs at positions 867 and 873. P881 carries the 3-hydroxyproline modification. Residues P882, P891, P894, P915, P924, P933, P942, P960, P969, P972, P978, P993, P999, P1005, P1014, and P1020 each carry the 4-hydroxyproline modification. A compositionally biased stretch (low complexity) spans 908 to 917 (ETGPAGRPGE). The span at 927-951 (AGEKGSPGADGPAGAPGTPGPQGIA) shows a compositional bias: low complexity. Residues 992–1002 (PPGPMGPPGLA) show a composition bias toward pro residues. Positions 1004–1019 (PPGESGREGSPGAEGS) are enriched in low complexity. The residue at position 1029 (K1029) is a 5-hydroxylysine. Residues 1038 to 1053 (AGPPGAPGAPGAPGPV) show a composition bias toward pro residues. 4-hydroxyproline is present on residues P1041, P1044, and P1047. The segment covering 1074-1088 (IGPVGARGPAGPQGP) has biased composition (low complexity). Positions 1089-1091 (RGD) match the Cell attachment site motif. The segment covering 1089–1103 (RGDKGETGEQGDRGI) has biased composition (basic and acidic residues). A 5-hydroxylysine modification is found at K1092. K1104 carries the 5-hydroxylysine; alternate modification. O-linked (Gal...) hydroxylysine; alternate glycosylation is present at K1104. A 4-hydroxyproline mark is found at P1116, P1119, P1122, P1140, and P1155. Low complexity predominate over residues 1122-1155 (PGEQGPSGASGPAGPRGPPGSAGSPGKDGLNGLP). P1160 carries the 3-hydroxyproline modification. A 4-hydroxyproline modification is found at P1161. Residues 1173–1188 (VGPPGPPGPPGPPGPP) show a composition bias toward pro residues. A 3-hydroxyproline modification is found at P1175. P1176 carries the 4-hydroxyproline modification. At P1178 the chain carries 3-hydroxyproline. P1179 carries the 4-hydroxyproline modification. The residue at position 1181 (P1181) is a 3-hydroxyproline. 4-hydroxyproline is present on residues P1182, P1185, and P1188. Positions 1189–1214 (SGGFDFSFLPQPPQEKAHDGGRYYRA) are nonhelical region (C-terminal). Positions 1203–1213 (EKAHDGGRYYR) are enriched in basic and acidic residues. K1204 is modified (allysine). Residues 1215–1460 (DDANVVRDRD…GMDIGPVCFL (246 aa)) constitute a propeptide, C-terminal propeptide. Residues 1225 to 1460 (LEVDTTLKSL…GMDIGPVCFL (236 aa)) enclose the Fibrillar collagen NC1 domain. Cystine bridges form between C1255–C1287, C1295–C1458, and C1366–C1411. The Ca(2+) site is built by D1273, N1275, Q1276, C1278, and D1281. An N-linked (GlcNAc...) asparagine glycan is attached at N1361.

This sequence belongs to the fibrillar collagen family. Trimers of one alpha 2(I) and two alpha 1(I) chains. Interacts with MRC2. Interacts with TRAM2. Interacts with MFAP4 in a Ca (2+)-dependent manner. In terms of processing, contains mostly 4-hydroxyproline. Proline residues at the third position of the tripeptide repeating unit (G-X-Y) are hydroxylated in some or all of the chains. Contains 3-hydroxyproline at a few sites. This modification occurs on the first proline residue in the sequence motif Gly-Pro-Hyp, where Hyp is 4-hydroxyproline. Post-translationally, lysine residues at the third position of the tripeptide repeating unit (G-X-Y) are 5-hydroxylated in some or all of the chains. In terms of processing, O-glycosylated on hydroxylated lysine residues. The O-linked glycan consists of a Glc-Gal disaccharide.

The protein resides in the secreted. It is found in the extracellular space. The protein localises to the extracellular matrix. In terms of biological role, type I collagen is a member of group I collagen (fibrillar forming collagen). The chain is Collagen alpha-1(I) chain (COL1A1) from Canis lupus familiaris (Dog).